The following is a 446-amino-acid chain: Protein odr-4 homolog (446 aa).

2 consecutive transmembrane segments (helical) span residues 81 to 101 and 424 to 444; these read MLPG…ELSK and MGVV…FNYF.

It belongs to the ODR-4 family.

It localises to the membrane. In terms of biological role, may play a role in the trafficking of a subset of G-protein coupled receptors. The polypeptide is Protein odr-4 homolog (ODR4) (Gallus gallus (Chicken)).